The primary structure comprises 118 residues: Large ribosomal subunit protein bL20 (118 aa).

This sequence belongs to the bacterial ribosomal protein bL20 family.

Binds directly to 23S ribosomal RNA and is necessary for the in vitro assembly process of the 50S ribosomal subunit. It is not involved in the protein synthesizing functions of that subunit. This is Large ribosomal subunit protein bL20 from Ralstonia nicotianae (strain ATCC BAA-1114 / GMI1000) (Ralstonia solanacearum).